The following is a 610-amino-acid chain: Autophagy-related protein 22-1 (610 aa).

Over residues 1 to 11 (MAFTPSSPPSP) the composition is skewed to pro residues. Residues 1 to 29 (MAFTPSSPPSPAADASQRPSRYPGEDTTP) are disordered. Residues 35–55 (ILGWYAYGIAAEVFAVCGVGS) traverse the membrane as a helical segment. N90 carries an N-linked (GlcNAc...) asparagine glycan. 3 helical membrane-spanning segments follow: residues 120 to 140 (SFAMYTFSLAVLVQALTLISF), 152 to 171 (TLLLAFGFIGSATSMLFVFV), and 189 to 209 (CLGSSFVVLNSFLPVLVANDP). A disordered region spans residues 229–265 (GQFEPRDSFSERNPEFESQYTPGIGLGSKPSTNATSP). Positions 232-243 (EPRDSFSERNPE) are enriched in basic and acidic residues. An N-linked (GlcNAc...) asparagine glycan is attached at N261. 8 helical membrane passes run 278–298 (VGLGYCAAVLVQILSIGLLFA), 310–330 (TLPLRFVLLLVGIWWFSFTMV), 384–404 (VFLVAWFLLSDAIATVSGTAI), 418–438 (VGCLSITATLSGMTGAFLWPV), 453–473 (LCIALFEIIPLYGMLAYIPLF), 488–510 (FPLAIVHGIVSGGLSSYCRSFFG), 522–544 (YALYAATDKGSSVIGPAIVGMLI), and 553–573 (GFFFIAILIVLPIPLVWMVNA). The segment at 588 to 610 (AKGQESETGEPGEEAEGLLARGA) is disordered. Positions 594–603 (ETGEPGEEAE) are enriched in acidic residues.

The protein belongs to the ATG22 family.

It localises to the vacuole membrane. In terms of biological role, vacuolar effluxer which mediate the efflux of amino acids resulting from autophagic degradation. The release of autophagic amino acids allows the maintenance of protein synthesis and viability during nitrogen starvation. The chain is Autophagy-related protein 22-1 (atg22-1) from Aspergillus terreus (strain NIH 2624 / FGSC A1156).